The primary structure comprises 155 residues: UPF0178 protein ACIAD2644 (155 aa).

Residues 120–155 (GAGVQTGGPPPISERDKREFSSALDQTILKQKRKTA) are disordered.

It belongs to the UPF0178 family.

This Acinetobacter baylyi (strain ATCC 33305 / BD413 / ADP1) protein is UPF0178 protein ACIAD2644.